The sequence spans 270 residues: 4-hydroxy-tetrahydrodipicolinate reductase (270 aa).

NAD(+)-binding positions include 11–16 (GCNGRM) and glutamate 37. An NADP(+)-binding site is contributed by arginine 38. Residues 101–103 (GTT) and 125–128 (ASNY) contribute to the NAD(+) site. Catalysis depends on histidine 158, which acts as the Proton donor/acceptor. Position 159 (histidine 159) interacts with (S)-2,3,4,5-tetrahydrodipicolinate. The active-site Proton donor is lysine 162. 168 to 169 (GT) is a (S)-2,3,4,5-tetrahydrodipicolinate binding site.

Belongs to the DapB family.

It localises to the cytoplasm. The enzyme catalyses (S)-2,3,4,5-tetrahydrodipicolinate + NAD(+) + H2O = (2S,4S)-4-hydroxy-2,3,4,5-tetrahydrodipicolinate + NADH + H(+). It carries out the reaction (S)-2,3,4,5-tetrahydrodipicolinate + NADP(+) + H2O = (2S,4S)-4-hydroxy-2,3,4,5-tetrahydrodipicolinate + NADPH + H(+). Its pathway is amino-acid biosynthesis; L-lysine biosynthesis via DAP pathway; (S)-tetrahydrodipicolinate from L-aspartate: step 4/4. Functionally, catalyzes the conversion of 4-hydroxy-tetrahydrodipicolinate (HTPA) to tetrahydrodipicolinate. This chain is 4-hydroxy-tetrahydrodipicolinate reductase, found in Aeromonas salmonicida (strain A449).